Consider the following 176-residue polypeptide: Large ribosomal subunit protein uL15 (176 aa).

The span at 1–13 shows a compositional bias: basic and acidic residues; sequence MKLNDLRDNEGAR. Disordered regions lie at residues 1–48 and 151–176; these read MKLN…AIKG and IPAA…AKAE. Residues 21–35 show a composition bias toward gly residues; the sequence is RGIGSGKGKTGGRGQ. A compositionally biased stretch (basic and acidic residues) spans 156 to 176; the sequence is PEHEKKAARSEANKKAKAKAE.

The protein belongs to the universal ribosomal protein uL15 family. As to quaternary structure, part of the 50S ribosomal subunit.

Functionally, binds to the 23S rRNA. The chain is Large ribosomal subunit protein uL15 from Erythrobacter litoralis (strain HTCC2594).